Consider the following 278-residue polypeptide: Hydroxyethylthiazole kinase (278 aa).

Met-51 is a substrate binding site. ATP contacts are provided by Arg-127 and Ser-173. Gly-201 lines the substrate pocket.

Belongs to the Thz kinase family. It depends on Mg(2+) as a cofactor.

The catalysed reaction is 5-(2-hydroxyethyl)-4-methylthiazole + ATP = 4-methyl-5-(2-phosphooxyethyl)-thiazole + ADP + H(+). It participates in cofactor biosynthesis; thiamine diphosphate biosynthesis; 4-methyl-5-(2-phosphoethyl)-thiazole from 5-(2-hydroxyethyl)-4-methylthiazole: step 1/1. Functionally, catalyzes the phosphorylation of the hydroxyl group of 4-methyl-5-beta-hydroxyethylthiazole (THZ). In Leptothrix cholodnii (strain ATCC 51168 / LMG 8142 / SP-6) (Leptothrix discophora (strain SP-6)), this protein is Hydroxyethylthiazole kinase.